The following is a 224-amino-acid chain: Peptidyl-prolyl cis-trans isomerase FKBP3 (224 aa).

Alanine 2 bears the N-acetylalanine mark. Serine 36 carries the post-translational modification Phosphoserine. Residues asparagine 87 to glycine 119 form a disordered region. A compositionally biased stretch (basic and acidic residues) spans lysine 89–glutamate 102. The residue at position 99 (lysine 99) is an N6-acetyllysine. The region spanning glycine 128 to aspartate 224 is the PPIase FKBP-type domain. Residue serine 152 is modified to Phosphoserine. At lysine 170 the chain carries N6-acetyllysine.

The protein belongs to the FKBP-type PPIase family.

It is found in the nucleus. The catalysed reaction is [protein]-peptidylproline (omega=180) = [protein]-peptidylproline (omega=0). Its activity is regulated as follows. Inhibited preferentially by rapamycin over FK506. In terms of biological role, FK506- and rapamycin-binding proteins (FKBPs) constitute a family of receptors for the two immunosuppressants which inhibit T-cell proliferation by arresting two distinct cytoplasmic signal transmission pathways. PPIases accelerate the folding of proteins. The polypeptide is Peptidyl-prolyl cis-trans isomerase FKBP3 (FKBP3) (Oryctolagus cuniculus (Rabbit)).